The primary structure comprises 200 residues: Pyridoxine/pyridoxamine 5'-phosphate oxidase (200 aa).

Residues 49–54 (RMLLLK), 64–65 (YT), Arg70, Lys71, and Gln93 contribute to the FMN site. A substrate-binding site is contributed by Lys54. Residues Tyr111, Arg115, and Ser119 each coordinate substrate. FMN-binding positions include 128–129 (QS) and Trp173. 179–181 (RLH) lines the substrate pocket. Residue Arg183 participates in FMN binding.

The protein belongs to the pyridoxamine 5'-phosphate oxidase family. In terms of assembly, homodimer. FMN serves as cofactor.

It catalyses the reaction pyridoxamine 5'-phosphate + O2 + H2O = pyridoxal 5'-phosphate + H2O2 + NH4(+). It carries out the reaction pyridoxine 5'-phosphate + O2 = pyridoxal 5'-phosphate + H2O2. Its pathway is cofactor metabolism; pyridoxal 5'-phosphate salvage; pyridoxal 5'-phosphate from pyridoxamine 5'-phosphate: step 1/1. It participates in cofactor metabolism; pyridoxal 5'-phosphate salvage; pyridoxal 5'-phosphate from pyridoxine 5'-phosphate: step 1/1. In terms of biological role, catalyzes the oxidation of either pyridoxine 5'-phosphate (PNP) or pyridoxamine 5'-phosphate (PMP) into pyridoxal 5'-phosphate (PLP). The sequence is that of Pyridoxine/pyridoxamine 5'-phosphate oxidase from Gluconobacter oxydans (strain 621H) (Gluconobacter suboxydans).